The primary structure comprises 463 residues: UDP-glucosyltransferase A1 (463 aa).

The protein belongs to the UDP-glycosyltransferase family.

The enzyme catalyses 18-hydroxy-(9Z)-octadecenoate + UDP-alpha-D-glucose = (9Z)-18-hydroxyoctadec-9-enoate 18-O-beta-D-glucoside + UDP + H(+). It catalyses the reaction 17-hydroxy-(9Z)-octadecenoate + UDP-alpha-D-glucose = (9Z)-17-hydroxyoctadec-9-enoate 17-O-beta-D-glucoside + UDP + H(+). In terms of biological role, catalyzes the first glycosylation step of sophorolipid biosynthesis, the coupling of glucose to a hydroxylated fatty acid to give rise to a glucolipid. Can glycosylate all hydroxyl fatty acids generated by cytochrome P450 monooxygenases CYP52M1, CYP52N1 and CYP52E3 into their corresponding glucolipids. Main products are 17-O- and 18-O-(beta-D-glucopyranosyl)-octadecenoic acids. The protein is UDP-glucosyltransferase A1 of Starmerella bombicola (Yeast).